The chain runs to 343 residues: Lactamase-like protein nscB (343 aa).

Positions 118, 120, 122, and 123 each coordinate Zn(2+). The active-site Proton donor/acceptor is Asp122.

It belongs to the metallo-beta-lactamase superfamily. The cofactor is Zn(2+).

The protein operates within secondary metabolite biosynthesis. Its function is as follows. Lactamase-like protein; part of the gene cluster that mediates the biosynthesis of neosartoricin B, a prenylated anthracenone that probably exhibits T-cell antiproliferative activity, suggestive of a physiological role as an immunosuppressive agent. The non-reducing polyketide synthase nscA probably synthesizes and cyclizes the decaketide backbone. The hydrolase nscB then mediates the product release through hydrolysis followed by spontaneous decarboxylation. The prenyltransferase nscD catalyzes the addition of the dimethylallyl group to the aromatic C5. The FAD-dependent monooxygenase nscC is then responsible for the stereospecific hydroxylation at C2. Neosartoricin B can be converted into two additional compounds neosartoricins C and D. Neosartoricin C is a spirocyclic compound that is cyclized through the attack of C3 hydroxyl on C14, followed by dehydration. On the other hand, neosartoricin D is a further cyclized compound in which attack of C2 on C14 in neosartoricin C results in the formation of the acetal-containing dioxabicyclo-octanone ring. Both of these compounds are novel and possibly represent related metabolites of the gene cluster. This is Lactamase-like protein nscB from Arthroderma otae (strain ATCC MYA-4605 / CBS 113480) (Microsporum canis).